Consider the following 85-residue polypeptide: uncharacterized protein (85 aa).

Positions 1-20 (MIKLFCVLAAFISINSACQS) are cleaved as a signal peptide.

This is an uncharacterized protein from Invertebrate iridescent virus 6 (IIV-6).